Consider the following 120-residue polypeptide: Large ribosomal subunit protein bL12 (120 aa).

Belongs to the bacterial ribosomal protein bL12 family. As to quaternary structure, homodimer. Part of the ribosomal stalk of the 50S ribosomal subunit. Forms a multimeric L10(L12)X complex, where L10 forms an elongated spine to which 2 to 4 L12 dimers bind in a sequential fashion. Binds GTP-bound translation factors.

Its function is as follows. Forms part of the ribosomal stalk which helps the ribosome interact with GTP-bound translation factors. Is thus essential for accurate translation. This chain is Large ribosomal subunit protein bL12, found in Aeromonas salmonicida (strain A449).